The sequence spans 162 residues: Cyclic pyranopterin monophosphate synthase (162 aa).

Residues leucine 75–histidine 77 and methionine 113–glutamate 114 each bind substrate. Aspartate 128 is a catalytic residue.

Belongs to the MoaC family. Homohexamer; trimer of dimers.

It catalyses the reaction (8S)-3',8-cyclo-7,8-dihydroguanosine 5'-triphosphate = cyclic pyranopterin phosphate + diphosphate. It participates in cofactor biosynthesis; molybdopterin biosynthesis. Its function is as follows. Catalyzes the conversion of (8S)-3',8-cyclo-7,8-dihydroguanosine 5'-triphosphate to cyclic pyranopterin monophosphate (cPMP). The protein is Cyclic pyranopterin monophosphate synthase of Burkholderia cenocepacia (strain HI2424).